The sequence spans 341 residues: Ectoine-binding periplasmic protein TeaA (341 aa).

The first 25 residues, 1–25 (MKAYKLLTTASIGALMLGMSTAAYS), serve as a signal peptide directing secretion. Glu34, Arg169, Asn209, Trp213, and Phe234 together coordinate L-ectoine.

This sequence belongs to the bacterial solute-binding protein 7 family. Monomer. The complex comprises the extracytoplasmic solute receptor protein TeaA, and the two transmembrane proteins TeaB and TeaC.

It is found in the periplasm. Functionally, part of the tripartite ATP-independent periplasmic (TRAP) transport system TeaABC involved in the uptake of ectoine and hydroxyectoine in response to osmotic upshock. Probably functions as a recovery system for synthesized ectoine that leaks out of the cell. Binds ectoine with high affinity. Affinity for hydroxyectoine is approximately 20-fold lower. The chain is Ectoine-binding periplasmic protein TeaA (teaA) from Halomonas elongata (strain ATCC 33173 / DSM 2581 / NBRC 15536 / NCIMB 2198 / 1H9).